Reading from the N-terminus, the 469-residue chain is Glutamate--tRNA ligase (469 aa).

A 'HIGH' region motif is present at residues 9-19 (PSPTGFLHVGG). The 'KMSKS' region signature appears at 236–240 (KLSKR). Lys239 lines the ATP pocket.

It belongs to the class-I aminoacyl-tRNA synthetase family. Glutamate--tRNA ligase type 1 subfamily. In terms of assembly, monomer.

Its subcellular location is the cytoplasm. The enzyme catalyses tRNA(Glu) + L-glutamate + ATP = L-glutamyl-tRNA(Glu) + AMP + diphosphate. In terms of biological role, catalyzes the attachment of glutamate to tRNA(Glu) in a two-step reaction: glutamate is first activated by ATP to form Glu-AMP and then transferred to the acceptor end of tRNA(Glu). The protein is Glutamate--tRNA ligase of Pseudoalteromonas atlantica (strain T6c / ATCC BAA-1087).